Consider the following 216-residue polypeptide: 3-keto-L-gulonate-6-phosphate decarboxylase UlaD (216 aa).

Aspartate 11 contacts substrate. Residues glutamate 33 and aspartate 62 each coordinate Mg(2+). Substrate is bound at residue arginine 192.

It belongs to the HPS/KGPDC family. KGPDC subfamily. As to quaternary structure, homodimer. The cofactor is Mg(2+).

It catalyses the reaction 3-dehydro-L-gulonate 6-phosphate + H(+) = L-xylulose 5-phosphate + CO2. The protein operates within cofactor degradation; L-ascorbate degradation; D-xylulose 5-phosphate from L-ascorbate: step 2/4. In terms of biological role, catalyzes the decarboxylation of 3-keto-L-gulonate-6-P into L-xylulose-5-P. Is involved in the anaerobic L-ascorbate utilization. The protein is 3-keto-L-gulonate-6-phosphate decarboxylase UlaD of Salmonella choleraesuis (strain SC-B67).